The primary structure comprises 305 residues: MVMGFVNVLKPPGLTSHDVVQNLRRLLKVKRIGHGGTLDPLAAGVLPVAVGTATRLLEYLQGGDKAYRAEFILGLKTDTQDLGGRVLARKPCPPFTEKDLQAATRPFTGTIRQVPPMVSAVHYQGRRLYELAREGLEVERPARQVTIHEFRLIRAWPDGPYYRALIDITCSRGTYIRTLGADWGDYLGVGATLAFLLRTRAGSFRLTDAWTLEEIAGAIDRGERTFLLPPAAGLAHLPVIIVPGEFIRHVSNGVAIKGDVCRPLPSLREGDIVRLETGEGQLLALARVEPDTRGSFLLKPHKVLK.

D39 acts as the Nucleophile in catalysis. The PUA domain maps to 237-305 (LPVIIVPGEF…FLLKPHKVLK (69 aa)).

It belongs to the pseudouridine synthase TruB family. Type 1 subfamily.

It catalyses the reaction uridine(55) in tRNA = pseudouridine(55) in tRNA. Functionally, responsible for synthesis of pseudouridine from uracil-55 in the psi GC loop of transfer RNAs. The chain is tRNA pseudouridine synthase B from Moorella thermoacetica (strain ATCC 39073 / JCM 9320).